The following is a 297-amino-acid chain: Carbamate kinase (297 aa).

The protein belongs to the carbamate kinase family.

Its subcellular location is the cytoplasm. The catalysed reaction is hydrogencarbonate + NH4(+) + ATP = carbamoyl phosphate + ADP + H2O + H(+). It carries out the reaction carbamate + ATP = carbamoyl phosphate + ADP. The enzyme catalyses hydrogencarbonate + NH4(+) = carbamate + H2O + H(+). It participates in nitrogen metabolism; (S)-allantoin degradation. Functionally, kinase involved in the anaerobic nitrogen utilization via the assimilation of allantoin. Catalyzes the transfer of a phosphate group from carbamoyl phosphate to ADP to produce ATP and leave carbamate, which spontaneously hydrolyzes to ammonia and hydrogencarbonate. The polypeptide is Carbamate kinase (Escherichia coli O6:H1 (strain CFT073 / ATCC 700928 / UPEC)).